Here is a 290-residue protein sequence, read N- to C-terminus: ATP synthase gamma chain (290 aa).

Belongs to the ATPase gamma chain family. As to quaternary structure, F-type ATPases have 2 components, CF(1) - the catalytic core - and CF(0) - the membrane proton channel. CF(1) has five subunits: alpha(3), beta(3), gamma(1), delta(1), epsilon(1). CF(0) has three main subunits: a, b and c.

Its subcellular location is the cell membrane. Produces ATP from ADP in the presence of a proton gradient across the membrane. The gamma chain is believed to be important in regulating ATPase activity and the flow of protons through the CF(0) complex. The sequence is that of ATP synthase gamma chain from Roseiflexus sp. (strain RS-1).